The sequence spans 216 residues: Phosphoserine phosphatase (216 aa).

Asp-10 serves as the catalytic Nucleophile. Positions 10 and 12 each coordinate Mg(2+). Asp-12 functions as the Proton donor in the catalytic mechanism. Substrate-binding positions include Glu-19, Arg-55, 98-99 (SG), and Lys-143. A Mg(2+)-binding site is contributed by Asp-166. Position 169 (Asn-169) interacts with substrate.

Belongs to the HAD-like hydrolase superfamily. SerB family. Requires Mg(2+) as cofactor.

It carries out the reaction O-phospho-L-serine + H2O = L-serine + phosphate. The catalysed reaction is O-phospho-D-serine + H2O = D-serine + phosphate. Its pathway is amino-acid biosynthesis; L-serine biosynthesis; L-serine from 3-phospho-D-glycerate: step 3/3. The sequence is that of Phosphoserine phosphatase from Lactococcus lactis subsp. lactis (strain IL1403) (Streptococcus lactis).